The primary structure comprises 296 residues: 4-hydroxybenzoate octaprenyltransferase (296 aa).

8 helical membrane-spanning segments follow: residues 28–48, 51–71, 102–122, 143–163, 174–194, 212–232, 233–253, and 274–294; these read IGTL…SDGI, LAVL…GCVI, LLLT…LNHL, FFPI…PMAF, AWIL…VYAM, FGRY…LLMA, VLGA…IVLL, and FLAN…HTFF.

Belongs to the UbiA prenyltransferase family. Mg(2+) serves as cofactor.

It localises to the cell inner membrane. The catalysed reaction is all-trans-octaprenyl diphosphate + 4-hydroxybenzoate = 4-hydroxy-3-(all-trans-octaprenyl)benzoate + diphosphate. The protein operates within cofactor biosynthesis; ubiquinone biosynthesis. Catalyzes the prenylation of para-hydroxybenzoate (PHB) with an all-trans polyprenyl group. Mediates the second step in the final reaction sequence of ubiquinone-8 (UQ-8) biosynthesis, which is the condensation of the polyisoprenoid side chain with PHB, generating the first membrane-bound Q intermediate 3-octaprenyl-4-hydroxybenzoate. The protein is 4-hydroxybenzoate octaprenyltransferase of Neisseria meningitidis serogroup C (strain 053442).